The chain runs to 392 residues: Bifunctional enzyme Fae/Hps (392 aa).

Residues 1 to 161 form a formaldehyde-activating enzyme region; that stretch reads MFQIGEALMG…EESNKSTHAI (161 aa). H17 (proton donor) is an active-site residue. Positions 19, 48, 66, 68, and 83 each coordinate substrate. The 3-hexulose-6-phosphate synthase stretch occupies residues 162–392; it reads MGFKVTRLWD…IDQFRVMTDF (231 aa).

It in the N-terminal section; belongs to the formaldehyde-activating enzyme family. This sequence in the C-terminal section; belongs to the HPS/KGPDC family. HPS subfamily.

It catalyses the reaction 5,6,7,8-tetrahydromethanopterin + formaldehyde = 5,10-methylenetetrahydromethanopterin + H2O. The catalysed reaction is D-ribulose 5-phosphate + formaldehyde = D-arabino-hex-3-ulose 6-phosphate. Its pathway is carbohydrate biosynthesis; D-ribose 5-phosphate biosynthesis. In terms of biological role, catalyzes the condensation of formaldehyde with tetrahydromethanopterin (H(4)MPT) to 5,10-methylenetetrahydromethanopterin. Functionally, catalyzes the reversible formation of ribulose-5-phosphate and formaldehyde from 3-hexulose-6-phosphate. This is Bifunctional enzyme Fae/Hps from Methanosarcina barkeri (strain Fusaro / DSM 804).